Here is a 29-residue protein sequence, read N- to C-terminus: Photosystem I reaction center subunit XII (29 aa).

The helical transmembrane segment at 7–24 threads the bilayer; the sequence is FVALLLALVPAVLAYRLG.

Belongs to the PsaM family.

The protein localises to the cellular thylakoid membrane. This is Photosystem I reaction center subunit XII from Synechococcus sp. (strain ATCC 27144 / PCC 6301 / SAUG 1402/1) (Anacystis nidulans).